The sequence spans 137 residues: Putative pre-16S rRNA nuclease (137 aa).

It belongs to the YqgF nuclease family.

The protein resides in the cytoplasm. Could be a nuclease involved in processing of the 5'-end of pre-16S rRNA. This chain is Putative pre-16S rRNA nuclease, found in Anaeromyxobacter dehalogenans (strain 2CP-C).